Consider the following 525-residue polypeptide: AP-4 complex accessory subunit Tepsin (525 aa).

Residues 8 to 141 (RDRLSFLHRL…FSDTVLPLAP (134 aa)) enclose the ENTH domain. The segment at 139–229 (LAPSQPLGTP…SHSGASREPG (91 aa)) is disordered. Over residues 193 to 225 (SGPSSQNSSQNSDLSRVSDSGSHSGSDSHSGAS) the composition is skewed to low complexity. Residues S333 and S356 each carry the phosphoserine modification. The segment at 355–465 (LSPARGTSAE…PKRGPSSCAW (111 aa)) is disordered. Positions 393–412 (PLSSTPVSSRSPAPSSGMPS) are enriched in low complexity. Over residues 413–429 (SPVPTPPPDASPIPAPG) the composition is skewed to pro residues. Over residues 434–448 (AEARLAESRRWRPER) the composition is skewed to basic and acidic residues. The segment at 467-477 (RDSLFAGMELV) is interaction with AP4B1. A disordered region spans residues 487-525 (AAAGESCPDAPRAPQTSSQRTAAKEPPGSEPSAFAFLNA). Positions 515–525 (SEPSAFAFLNA) are interaction with AP4E1.

In terms of assembly, interacts with AP4B1 and AP4E1; the interaction is direct and mediates the association of TEPSIN with the adapter-like complex 4 (AP-4), a heterotetramer composed of AP4B1, AP4E1, AP4M1 and AP4S1.

It is found in the golgi apparatus. It localises to the trans-Golgi network membrane. The protein localises to the cytoplasmic vesicle. The protein resides in the cytoplasm. Its subcellular location is the cytosol. Functionally, associates with the adapter-like complex 4 (AP-4) and may therefore play a role in vesicular trafficking of proteins at the trans-Golgi network. In Homo sapiens (Human), this protein is AP-4 complex accessory subunit Tepsin.